A 538-amino-acid chain; its full sequence is NAD(P)H-quinone oxidoreductase chain 4 (538 aa).

The next 14 helical transmembrane spans lie at 11 to 31, 43 to 63, 95 to 115, 119 to 139, 143 to 163, 175 to 195, 217 to 237, 251 to 271, 285 to 305, 314 to 334, 340 to 360, 382 to 404, 425 to 445, and 472 to 492; these read FPWL…VPFI, YALI…FKGF, MPLI…AWPV, PKLF…VFAV, LLFF…LAIW, FIIY…AMGF, GFQL…LPIV, TAPV…YALL, FAPL…LTSF, IAYS…SFSS, AMLQ…LVGA, IMFA…SGFI, IVVA…LLSM, and IYII…PKIM.

Belongs to the complex I subunit 4 family.

It is found in the cellular thylakoid membrane. It carries out the reaction a plastoquinone + NADH + (n+1) H(+)(in) = a plastoquinol + NAD(+) + n H(+)(out). The enzyme catalyses a plastoquinone + NADPH + (n+1) H(+)(in) = a plastoquinol + NADP(+) + n H(+)(out). NDH-1 shuttles electrons from NAD(P)H, via FMN and iron-sulfur (Fe-S) centers, to quinones in the respiratory chain. The immediate electron acceptor for the enzyme in this species is believed to be plastoquinone. Couples the redox reaction to proton translocation (for every two electrons transferred, four hydrogen ions are translocated across the cytoplasmic membrane), and thus conserves the redox energy in a proton gradient. In Prochlorococcus marinus (strain NATL1A), this protein is NAD(P)H-quinone oxidoreductase chain 4.